We begin with the raw amino-acid sequence, 388 residues long: Succinate--CoA ligase [ADP-forming] subunit beta (388 aa).

An ATP-grasp domain is found at 9–245 (KELLASYGLP…KSQENERELK (237 aa)). ATP-binding positions include Lys46, 53-55 (GRG), Glu100, Tyr103, and Glu108. Residues Asn200 and Asp214 each contribute to the Mg(2+) site. Substrate is bound by residues Asn265 and 322-324 (GIV).

It belongs to the succinate/malate CoA ligase beta subunit family. As to quaternary structure, heterotetramer of two alpha and two beta subunits. Mg(2+) is required as a cofactor.

The catalysed reaction is succinate + ATP + CoA = succinyl-CoA + ADP + phosphate. It carries out the reaction GTP + succinate + CoA = succinyl-CoA + GDP + phosphate. The protein operates within carbohydrate metabolism; tricarboxylic acid cycle; succinate from succinyl-CoA (ligase route): step 1/1. Its function is as follows. Succinyl-CoA synthetase functions in the citric acid cycle (TCA), coupling the hydrolysis of succinyl-CoA to the synthesis of either ATP or GTP and thus represents the only step of substrate-level phosphorylation in the TCA. The beta subunit provides nucleotide specificity of the enzyme and binds the substrate succinate, while the binding sites for coenzyme A and phosphate are found in the alpha subunit. The polypeptide is Succinate--CoA ligase [ADP-forming] subunit beta (Neisseria meningitidis serogroup B (strain ATCC BAA-335 / MC58)).